Here is a 185-residue protein sequence, read N- to C-terminus: Peptidyl-tRNA hydrolase (185 aa).

Tyr-14 is a binding site for tRNA. The active-site Proton acceptor is His-19. Residues Phe-64, Asn-66, and Asn-112 each coordinate tRNA.

Belongs to the PTH family. As to quaternary structure, monomer.

It localises to the cytoplasm. The enzyme catalyses an N-acyl-L-alpha-aminoacyl-tRNA + H2O = an N-acyl-L-amino acid + a tRNA + H(+). Its function is as follows. Hydrolyzes ribosome-free peptidyl-tRNAs (with 1 or more amino acids incorporated), which drop off the ribosome during protein synthesis, or as a result of ribosome stalling. Functionally, catalyzes the release of premature peptidyl moieties from peptidyl-tRNA molecules trapped in stalled 50S ribosomal subunits, and thus maintains levels of free tRNAs and 50S ribosomes. In Lacticaseibacillus casei (strain BL23) (Lactobacillus casei), this protein is Peptidyl-tRNA hydrolase.